The chain runs to 320 residues: HPr kinase/phosphorylase (320 aa).

Catalysis depends on residues histidine 141 and lysine 162. 156 to 163 (GHSGLGKS) contacts ATP. Serine 163 contacts Mg(2+). Aspartate 180 acts as the Proton acceptor; for phosphorylation activity. Proton donor; for dephosphorylation activity in catalysis. An important for the catalytic mechanism of both phosphorylation and dephosphorylation region spans residues 204–213 (LEVRGLGILN). Residue glutamate 205 participates in Mg(2+) binding. Arginine 248 is an active-site residue. Residues 269-274 (PVAVGR) form an important for the catalytic mechanism of dephosphorylation region.

The protein belongs to the HPrK/P family. Homohexamer. Mg(2+) serves as cofactor.

The catalysed reaction is [HPr protein]-L-serine + ATP = [HPr protein]-O-phospho-L-serine + ADP + H(+). The enzyme catalyses [HPr protein]-O-phospho-L-serine + phosphate + H(+) = [HPr protein]-L-serine + diphosphate. Functionally, catalyzes the ATP- as well as the pyrophosphate-dependent phosphorylation of a specific serine residue in HPr, a phosphocarrier protein of the phosphoenolpyruvate-dependent sugar phosphotransferase system (PTS). HprK/P also catalyzes the pyrophosphate-producing, inorganic phosphate-dependent dephosphorylation (phosphorolysis) of seryl-phosphorylated HPr (P-Ser-HPr). The sequence is that of HPr kinase/phosphorylase from Neisseria meningitidis serogroup C / serotype 2a (strain ATCC 700532 / DSM 15464 / FAM18).